The sequence spans 763 residues: Phosphoglycerol transferase I (763 aa).

4 helical membrane passes run 1 to 21 (MSEL…AWKA), 26 to 46 (WWFA…ITLF), 77 to 97 (ILPG…LGWI), and 108 to 128 (FGYS…SPAF).

Belongs to the OpgB family.

It localises to the cell inner membrane. It catalyses the reaction a phosphatidylglycerol + a membrane-derived-oligosaccharide D-glucose = a 1,2-diacyl-sn-glycerol + a membrane-derived-oligosaccharide 6-(glycerophospho)-D-glucose.. It participates in glycan metabolism; osmoregulated periplasmic glucan (OPG) biosynthesis. Transfers a phosphoglycerol residue from phosphatidylglycerol to the membrane-bound nascent glucan backbones. The polypeptide is Phosphoglycerol transferase I (Escherichia coli (strain ATCC 8739 / DSM 1576 / NBRC 3972 / NCIMB 8545 / WDCM 00012 / Crooks)).